Here is a 581-residue protein sequence, read N- to C-terminus: Kelch-like protein 38 (581 aa).

Residues 34-101 form the BTB domain; the sequence is TDVSICSGAW…VYTGEVHISA (68 aa). Residues 136-237 enclose the BACK domain; sequence CLGLVRLAEI…HPAFFHHFIA (102 aa). Kelch repeat units follow at residues 285-332, 334-383, 384-431, 433-479, 480-521, and 523-573; these read FLLL…TLHR, VYVL…THRN, FIFS…VKDQ, LYLF…VLGE, QIVI…VMGN, and LYVT…TLQC.

In Mus musculus (Mouse), this protein is Kelch-like protein 38 (Klhl38).